The following is a 296-amino-acid chain: MNPKSPLFLRLSDRLDVYLRLMRADKPIGTLLLLWPTYWALWLASDGIPDLAVLAAFTIGTFLMRSAGCVINDFADRDFDGAVERTKNRPFAQGRVKKKEALLLTAFLCLLAALCLIPLNHLTWLMSLPALFLALTYPFTKRFFPIPQLYLGLAFSFGIPMAFAAVAGNVPPQAWILFAANVLWTLAYDTVYAMADKEDDLKIGIKTSAVTFGRYDIAAVMLCHGGFTLLMAVLGAVIGAAWAYWTAIPIVLLLQYRQYAAIKSRVRQICFETFLANNRIGWVWFTAIFAHTFFAK.

8 helical membrane passes run 28–48, 51–71, 102–122, 143–163, 174–194, 212–232, 233–253, and 274–294; these read IGTL…SDGI, LAVL…GCVI, LLLT…LNHL, FFPI…PMAF, AWIL…VYAM, FGRY…LLMA, VLGA…IVLL, and FLAN…HTFF.

Belongs to the UbiA prenyltransferase family. Mg(2+) serves as cofactor.

The protein resides in the cell inner membrane. It carries out the reaction all-trans-octaprenyl diphosphate + 4-hydroxybenzoate = 4-hydroxy-3-(all-trans-octaprenyl)benzoate + diphosphate. It functions in the pathway cofactor biosynthesis; ubiquinone biosynthesis. Catalyzes the prenylation of para-hydroxybenzoate (PHB) with an all-trans polyprenyl group. Mediates the second step in the final reaction sequence of ubiquinone-8 (UQ-8) biosynthesis, which is the condensation of the polyisoprenoid side chain with PHB, generating the first membrane-bound Q intermediate 3-octaprenyl-4-hydroxybenzoate. This is 4-hydroxybenzoate octaprenyltransferase from Neisseria meningitidis serogroup B (strain ATCC BAA-335 / MC58).